Here is a 395-residue protein sequence, read N- to C-terminus: MAGQGSVRLTRKSDNVVIIEKDLATEEMVLSMGPQHPSTHGVLRLECRTDGEVVTEAEPYLGYLHRCFEKYCENVDYPAIVPYTDRMDYLAGMNSEMAYAIAVEKLLDIEIPRRVEFIRVIVSELNRIASHLVAIGTYAIDLGAFTPFLFCFRDREHILNMLEWASGARMLYNYIWIGGLAYDVPADFQKRVGEFVDYFRPKALELSRLLTENEIFVKRTKGIGIMPADVAINYGWSGPMLRGSGVQWDLRRNDPYSIYPELDFAVPVPDGKFSDVGDCLSRHLVRALEIEESLKIIEQCIEKMPSAEGFDPRAAVPKRIRPKAGEVYARAENPRGELGFYILSDGKSTSPVRCKARSSCFVNLSAMKDLSKGQLIPDLVAIIGSIDIVLGEVDR.

The protein belongs to the complex I 49 kDa subunit family. NDH-1 is composed of 14 different subunits. Subunits NuoB, C, D, E, F, and G constitute the peripheral sector of the complex.

The protein localises to the cell inner membrane. It catalyses the reaction a quinone + NADH + 5 H(+)(in) = a quinol + NAD(+) + 4 H(+)(out). Functionally, NDH-1 shuttles electrons from NADH, via FMN and iron-sulfur (Fe-S) centers, to quinones in the respiratory chain. The immediate electron acceptor for the enzyme in this species is believed to be a menaquinone. Couples the redox reaction to proton translocation (for every two electrons transferred, four hydrogen ions are translocated across the cytoplasmic membrane), and thus conserves the redox energy in a proton gradient. This Chlorobium luteolum (strain DSM 273 / BCRC 81028 / 2530) (Pelodictyon luteolum) protein is NADH-quinone oxidoreductase subunit D.